The primary structure comprises 942 residues: Mitogen-activated protein kinase kinase kinase A (942 aa).

Residues 15-96 form the PB1 domain; that stretch reads FIRIKCILGD…NPTKIISTKF (82 aa). Positions 107-144 are disordered; that stretch reads PLSSSLSPTQSLILNNNNNNNNNNNNNNNNNNNNNNNN. Residues 170–429 form the Protein kinase domain; sequence WQKGQILGRG…ANQLLKHPFI (260 aa). ATP is bound by residues 176–184 and Lys199; that span reads LGRGGYGSV. Asp297 serves as the catalytic Proton acceptor. Over residues 441–486 the composition is skewed to low complexity; it reads ISPTTTLSTNTTNTTATTTTTNNATNSNINQQQQQQQQQPPTRTQR. The tract at residues 441–512 is disordered; that stretch reads ISPTTTLSTN…ISTSTSSSSS (72 aa). Polar residues predominate over residues 487-498; it reads VSISAGSSNNKR. Over residues 500-512 the composition is skewed to low complexity; sequence TPPISTSTSSSSS. A helical transmembrane segment spans residues 513–533; that stretch reads SILNNFSINIILPINLIILIF. One can recognise an F-box domain in the interval 518 to 564; the sequence is FSINIILPINLIILIFREIKPNFVNTLSRVCKHWKQIIDDDELWNKY. WD repeat units follow at residues 607-646, 690-733, 736-778, 780-825, 828-865, 872-909, and 912-942; these read GHDKGVFCVKLIDDQGMVLSGGEDKKLKVWDISGNHHHNH, GHSG…TLFT, NHQE…STLR, HTGG…KVRS, QHTEDVLCCYVFDQKVVTGSCDGTIKLWDIGTGKTIST, RQKNYVWTVQFDQSKIISSGKTGIIRIWDIYNERDSRS, and GHHETIFSLQFNNQKLITGSLDKLVKIWSID.

It belongs to the protein kinase superfamily. STE Ser/Thr protein kinase family. MAP kinase kinase kinase subfamily. Interacts with ubcB and ubpB. Requires Mg(2+) as cofactor. In terms of processing, ubcB and ubpB differentially control ubiquitination/deubiquitination and degradation in a cell-type-specific and temporally regulated manner.

It is found in the membrane. It catalyses the reaction L-seryl-[protein] + ATP = O-phospho-L-seryl-[protein] + ADP + H(+). It carries out the reaction L-threonyl-[protein] + ATP = O-phospho-L-threonyl-[protein] + ADP + H(+). Functionally, regulates cell-type differentiation and spatial patterning, required for the proper induction and maintenance of prespore cell differentiation. This is Mitogen-activated protein kinase kinase kinase A from Dictyostelium discoideum (Social amoeba).